Consider the following 160-residue polypeptide: Cytochrome b6-f complex subunit 4 (160 aa).

The next 3 helical transmembrane spans lie at 36–56 (LLYV…GLAI), 95–115 (LLGV…PFIE), and 131–151 (TVFL…TMPI).

The protein belongs to the cytochrome b family. PetD subfamily. In terms of assembly, the 4 large subunits of the cytochrome b6-f complex are cytochrome b6, subunit IV (17 kDa polypeptide, petD), cytochrome f and the Rieske protein, while the 4 small subunits are petG, petL, petM and petN. The complex functions as a dimer.

The protein localises to the plastid. The protein resides in the chloroplast thylakoid membrane. In terms of biological role, component of the cytochrome b6-f complex, which mediates electron transfer between photosystem II (PSII) and photosystem I (PSI), cyclic electron flow around PSI, and state transitions. This is Cytochrome b6-f complex subunit 4 from Pyropia yezoensis (Susabi-nori).